The following is a 122-amino-acid chain: Ribonuclease P protein component (122 aa).

It belongs to the RnpA family. Consists of a catalytic RNA component (M1 or rnpB) and a protein subunit.

It catalyses the reaction Endonucleolytic cleavage of RNA, removing 5'-extranucleotides from tRNA precursor.. In terms of biological role, RNaseP catalyzes the removal of the 5'-leader sequence from pre-tRNA to produce the mature 5'-terminus. It can also cleave other RNA substrates such as 4.5S RNA. The protein component plays an auxiliary but essential role in vivo by binding to the 5'-leader sequence and broadening the substrate specificity of the ribozyme. In Lactobacillus gasseri (strain ATCC 33323 / DSM 20243 / BCRC 14619 / CIP 102991 / JCM 1131 / KCTC 3163 / NCIMB 11718 / NCTC 13722 / AM63), this protein is Ribonuclease P protein component.